Here is a 445-residue protein sequence, read N- to C-terminus: Putative ubiquitin carboxyl-terminal hydrolase L293 (445 aa).

A USP domain is found at 133–441; it reads KALANFGNSC…SAYIILYGDI (309 aa). The active-site Nucleophile is Cys-142. His-384 (proton acceptor) is an active-site residue.

It belongs to the peptidase C19 family.

It localises to the virion. It catalyses the reaction Thiol-dependent hydrolysis of ester, thioester, amide, peptide and isopeptide bonds formed by the C-terminal Gly of ubiquitin (a 76-residue protein attached to proteins as an intracellular targeting signal).. The chain is Putative ubiquitin carboxyl-terminal hydrolase L293 from Acanthamoeba polyphaga mimivirus (APMV).